The primary structure comprises 84 residues: UPF0291 protein EUBELI_00985 (84 aa).

Belongs to the UPF0291 family.

The protein localises to the cytoplasm. The protein is UPF0291 protein EUBELI_00985 of Lachnospira eligens (strain ATCC 27750 / DSM 3376 / VPI C15-48 / C15-B4) (Eubacterium eligens).